A 139-amino-acid chain; its full sequence is MAEGGFWKKLTNFFTASEEDEDIIEEDYMDEGYEAEEGTGFVPVQTRAVPVGSTIWVYQPSSFSFDVDSSFIGARIKDGYIIILNLQDLDDLSAQRLIDFVSGALYSVEGKLKAISSSVFLLVPKNVRVESFNEGFGTE.

The protein belongs to the SepF family. Homodimer. Interacts with FtsZ.

The protein resides in the cytoplasm. Functionally, cell division protein that is part of the divisome complex and is recruited early to the Z-ring. Probably stimulates Z-ring formation, perhaps through the cross-linking of FtsZ protofilaments. Its function overlaps with FtsA. This Coprothermobacter proteolyticus (strain ATCC 35245 / DSM 5265 / OCM 4 / BT) protein is Cell division protein SepF.